Reading from the N-terminus, the 406-residue chain is MGEIFVAGVNFKVAPVEVREKLACSLEETKKVLPILKRETPLEEVMLLSTCNRVEVYAYNFVENSEDLINKLLEIKRLNPSFKRYFFVKRGEEAVYHIFKVASSLDSMVIGEPQIVAQFKEAYRVAKEAGTVGKILNRVYEKALRASKRVRTETGISRSAVSVSYAAVELAKKIFGDLKEAKVLLIGAGEMGELAANYLRRFGAKLHITNRTYERALKLVKELSGNVLRFEELKEYLPLMDIVIVSTGAKDYILKREDFERSVRERHYEPQFVIDIAVPRNVDPEAGNVEGVFLYDIDDLKQVVEENLKERIKEAQRGEIILWDEVKKFMNWYESLKAEPYILELKASVEGKEVSPYIKKLVHRAIKEIKRNPEVADIILRIFKEVEKNEPRRKELSNVYNGTHGA.

Substrate-binding positions include 50–53 (TCNR), S107, 112–114 (EPQ), and Q118. The active-site Nucleophile is the C51. 187-192 (GAGEMG) lines the NADP(+) pocket.

It belongs to the glutamyl-tRNA reductase family. In terms of assembly, homodimer.

It carries out the reaction (S)-4-amino-5-oxopentanoate + tRNA(Glu) + NADP(+) = L-glutamyl-tRNA(Glu) + NADPH + H(+). It participates in porphyrin-containing compound metabolism; protoporphyrin-IX biosynthesis; 5-aminolevulinate from L-glutamyl-tRNA(Glu): step 1/2. Catalyzes the NADPH-dependent reduction of glutamyl-tRNA(Glu) to glutamate 1-semialdehyde (GSA). This chain is Glutamyl-tRNA reductase, found in Aquifex aeolicus (strain VF5).